We begin with the raw amino-acid sequence, 37 residues long: Photosystem I reaction center subunit VIII (37 aa).

A helical transmembrane segment spans residues 7-27 (LPSIFVPLVGLVFPAIAMASL).

The protein belongs to the PsaI family.

It localises to the plastid. It is found in the chloroplast thylakoid membrane. Its function is as follows. May help in the organization of the PsaL subunit. The polypeptide is Photosystem I reaction center subunit VIII (Populus alba (White poplar)).